Here is a 395-residue protein sequence, read N- to C-terminus: Elongation factor Tu (395 aa).

A tr-type G domain is found at 6 to 205 (KPHINVGTIG…NALEKIDLPI (200 aa)). Positions 15 to 22 (GHVDHGKT) are G1. GTP is bound at residue 15–22 (GHVDHGKT). Thr22 provides a ligand contact to Mg(2+). The tract at residues 59–63 (GITIS) is G2. A G3 region spans residues 80 to 83 (DCPG). Residues 80–84 (DCPGH) and 135–138 (NKCD) each bind GTP. A G4 region spans residues 135-138 (NKCD). Positions 173–175 (SAV) are G5.

This sequence belongs to the TRAFAC class translation factor GTPase superfamily. Classic translation factor GTPase family. EF-Tu/EF-1A subfamily. Monomer.

It is found in the cytoplasm. The enzyme catalyses GTP + H2O = GDP + phosphate + H(+). Functionally, GTP hydrolase that promotes the GTP-dependent binding of aminoacyl-tRNA to the A-site of ribosomes during protein biosynthesis. In Ehrlichia ruminantium (strain Gardel), this protein is Elongation factor Tu.